The sequence spans 129 residues: uncharacterized protein (129 aa).

This is an uncharacterized protein from Methanocaldococcus jannaschii (strain ATCC 43067 / DSM 2661 / JAL-1 / JCM 10045 / NBRC 100440) (Methanococcus jannaschii).